The following is a 324-amino-acid chain: 4-hydroxy-3-methylbut-2-enyl diphosphate reductase (324 aa).

A [4Fe-4S] cluster-binding site is contributed by Cys-28. (2E)-4-hydroxy-3-methylbut-2-enyl diphosphate contacts are provided by His-57 and His-90. The dimethylallyl diphosphate site is built by His-57 and His-90. Residues His-57 and His-90 each contribute to the isopentenyl diphosphate site. Cys-112 contacts [4Fe-4S] cluster. His-140 provides a ligand contact to (2E)-4-hydroxy-3-methylbut-2-enyl diphosphate. Position 140 (His-140) interacts with dimethylallyl diphosphate. Residue His-140 coordinates isopentenyl diphosphate. Glu-142 serves as the catalytic Proton donor. A (2E)-4-hydroxy-3-methylbut-2-enyl diphosphate-binding site is contributed by Thr-180. [4Fe-4S] cluster is bound at residue Cys-210. 4 residues coordinate (2E)-4-hydroxy-3-methylbut-2-enyl diphosphate: Ser-238, Ser-239, Asn-240, and Ser-282. The dimethylallyl diphosphate site is built by Ser-238, Ser-239, Asn-240, and Ser-282. 4 residues coordinate isopentenyl diphosphate: Ser-238, Ser-239, Asn-240, and Ser-282.

Belongs to the IspH family. The cofactor is [4Fe-4S] cluster.

The catalysed reaction is isopentenyl diphosphate + 2 oxidized [2Fe-2S]-[ferredoxin] + H2O = (2E)-4-hydroxy-3-methylbut-2-enyl diphosphate + 2 reduced [2Fe-2S]-[ferredoxin] + 2 H(+). It carries out the reaction dimethylallyl diphosphate + 2 oxidized [2Fe-2S]-[ferredoxin] + H2O = (2E)-4-hydroxy-3-methylbut-2-enyl diphosphate + 2 reduced [2Fe-2S]-[ferredoxin] + 2 H(+). It participates in isoprenoid biosynthesis; dimethylallyl diphosphate biosynthesis; dimethylallyl diphosphate from (2E)-4-hydroxy-3-methylbutenyl diphosphate: step 1/1. Its pathway is isoprenoid biosynthesis; isopentenyl diphosphate biosynthesis via DXP pathway; isopentenyl diphosphate from 1-deoxy-D-xylulose 5-phosphate: step 6/6. Its function is as follows. Catalyzes the conversion of 1-hydroxy-2-methyl-2-(E)-butenyl 4-diphosphate (HMBPP) into a mixture of isopentenyl diphosphate (IPP) and dimethylallyl diphosphate (DMAPP). Acts in the terminal step of the DOXP/MEP pathway for isoprenoid precursor biosynthesis. This is 4-hydroxy-3-methylbut-2-enyl diphosphate reductase from Ralstonia nicotianae (strain ATCC BAA-1114 / GMI1000) (Ralstonia solanacearum).